A 293-amino-acid polypeptide reads, in one-letter code: Cyclohexadienyl dehydrogenase (293 aa).

The Prephenate/arogenate dehydrogenase domain maps to 5-293 (KHIAIIGLGL…ALKTDHDIRP (289 aa)). 6-30 (HIAIIGLGLIGSSAARATKAYCPDV) lines the NAD(+) pocket.

This sequence belongs to the prephenate/arogenate dehydrogenase family. As to quaternary structure, homodimer.

The enzyme catalyses L-arogenate + NAD(+) = L-tyrosine + CO2 + NADH. The catalysed reaction is prephenate + NAD(+) = 3-(4-hydroxyphenyl)pyruvate + CO2 + NADH. Its pathway is amino-acid biosynthesis; L-tyrosine biosynthesis; (4-hydroxyphenyl)pyruvate from prephenate (NAD(+) route): step 1/1. The protein operates within amino-acid biosynthesis; L-tyrosine biosynthesis; L-tyrosine from L-arogenate (NAD(+) route): step 1/1. With respect to regulation, insensitive to feedback inhibition by L-tyrosine. Functionally, can function as either prephenate dehydrogenase or as arogenate dehydrogenase in the biosynthesis of L-tyrosine. Catalyzes two analogous reactions: converts prephenate to 4-hydroxyphenylpyruvate and transforms L-arogenate to L-tyrosine. Is not able to utilize NADP(+) instead of NAD(+) as cosubstrate. The polypeptide is Cyclohexadienyl dehydrogenase (Zymomonas mobilis subsp. mobilis (strain ATCC 31821 / ZM4 / CP4)).